Reading from the N-terminus, the 371-residue chain is Methylthioribose-1-phosphate isomerase (371 aa).

Substrate contacts are provided by residues 53-55, R90, and Q203; that span reads RGA. The Proton donor role is filled by D243. Residue 253-254 participates in substrate binding; it reads NK.

Belongs to the eIF-2B alpha/beta/delta subunits family. MtnA subfamily.

It catalyses the reaction 5-(methylsulfanyl)-alpha-D-ribose 1-phosphate = 5-(methylsulfanyl)-D-ribulose 1-phosphate. It carries out the reaction 5-deoxy-alpha-D-ribose 1-phosphate = 5-deoxy-D-ribulose 1-phosphate. Its pathway is amino-acid biosynthesis; L-methionine biosynthesis via salvage pathway; L-methionine from S-methyl-5-thio-alpha-D-ribose 1-phosphate: step 1/6. Functionally, catalyzes the interconversion of methylthioribose-1-phosphate (MTR-1-P) into methylthioribulose-1-phosphate (MTRu-1-P). Also catalyzes the interconversion of 5-deoxyribose 1-phosphate and 5-deoxyribulose 1-phosphate. Part of a bifunctional DHAP-shunt salvage pathway for SAM by-products. This chain is Methylthioribose-1-phosphate isomerase, found in Escherichia coli O45:K1 (strain S88 / ExPEC).